The primary structure comprises 215 residues: RNA pyrophosphohydrolase (215 aa).

Residues 6–149 form the Nudix hydrolase domain; sequence GFRPNVGIIL…KRDVYQLALT (144 aa). The short motif at 38 to 59 is the Nudix box element; it reads GGIKYGETPMQAMYRELHEETG.

It belongs to the Nudix hydrolase family. RppH subfamily. The cofactor is a divalent metal cation.

Accelerates the degradation of transcripts by removing pyrophosphate from the 5'-end of triphosphorylated RNA, leading to a more labile monophosphorylated state that can stimulate subsequent ribonuclease cleavage. The sequence is that of RNA pyrophosphohydrolase from Burkholderia multivorans (strain ATCC 17616 / 249).